The following is a 559-amino-acid chain: AP-4 complex accessory subunit tepsin (559 aa).

Positions 2-135 constitute an ENTH domain; it reads LDRLAFLQQL…FSESIPSPSH (134 aa). 3 disordered regions span residues 131–157, 214–290, and 472–491; these read PSPS…APAL, AIPS…ESLD, and PNGA…SDPA. Composition is skewed to low complexity over residues 144–154 and 266–281; these read QSGMGSQASSA and SRSS…DGQS. The span at 472 to 485 shows a compositional bias: polar residues; sequence PNGAANQKNPNGST.

It is found in the golgi apparatus. It localises to the trans-Golgi network membrane. Its subcellular location is the cytoplasmic vesicle. The protein localises to the cytoplasm. The protein resides in the cytosol. In terms of biological role, may play a role in vesicular trafficking of proteins at the trans-Golgi network. This chain is AP-4 complex accessory subunit tepsin, found in Xenopus laevis (African clawed frog).